Consider the following 349-residue polypeptide: MIEFDNLTYLHGKPQGTGLLKANPEDFVVVEDLGFEPDGEGEHILVRILKNGCNTRFVADALAKFLKIHAREVSFAGQKDKHAVTEQWLCARVPGKEMPDLSAFQLEGCQVLEYARHKRKLRLGALKGNAFTLVLREVSNRDDVEQRLIDICVKGVPNYFGAQRFGIGGSNLQGALRWAQTNTPVRDRNKRSFWLSAARSALFNQIVAERLKKADVNQVVDGDALQLAGRGSWFVATTEELAELQRRVNDKVLMITAVLPGSGEWGTQREALAFEQAAVAEETELQTLLVREKVEAARRAMLLYPQQLSWNWWDDVTVEIRFWLPAGSFATSVVRELINTTGDYAHIAE.

F27 contributes to the substrate binding site. D80 acts as the Nucleophile in catalysis. Residue N129 coordinates substrate. A TRUD domain is found at 155 to 303; sequence GVPNYFGAQR…VEAARRAMLL (149 aa). Substrate is bound at residue F329.

The protein belongs to the pseudouridine synthase TruD family.

It catalyses the reaction uridine(13) in tRNA = pseudouridine(13) in tRNA. Its function is as follows. Responsible for synthesis of pseudouridine from uracil-13 in transfer RNAs. This Escherichia coli O81 (strain ED1a) protein is tRNA pseudouridine synthase D.